Here is a 425-residue protein sequence, read N- to C-terminus: Polycomb protein esc (425 aa).

Over residues 1-10 (MSSDKVKNGN) the composition is skewed to basic and acidic residues. The interval 1 to 64 (MSSDKVKNGN…KPKSRAAYKY (64 aa)) is disordered. The span at 11 to 20 (EPEESEESCG) shows a compositional bias: acidic residues. The residue at position 15 (Ser15) is a Phosphoserine. Positions 21–42 (DESASYTTNSTTSRSKSPSSST) are enriched in low complexity. Residues 43–60 (RSKRRGRRSTKSKPKSRA) show a composition bias toward basic residues. WD repeat units lie at residues 71 to 114 (NHGA…GMQL), 126 to 165 (VFYT…AVGN), 168 to 208 (GHGQ…CIAI), 214 to 253 (GHRD…FHHK), 284 to 321 (IHRN…QSFE), 340 to 379 (ECEI…PEGA), and 388 to 424 (RSVA…QTTS).

It belongs to the WD repeat ESC family. As to quaternary structure, component of the polycomb repressive complex 2 (PRC2, also known as the Esc/E(Z) complex), composed of Caf1-55, esc, E(z), Su(z)12, and possibly pho. PRC2 associates with the accessory components Jarid2 and jing to form the PRC2 Jarid2-jing variant (PRC2.2). PRC2 may also associate with Pcl and HDAC1/Rpd3 during early embryogenesis. This complex is distinct from the PRC1 complex, which contains many other PcG proteins like Pc, Ph, Psc, Su(z)2. The two complexes however cooperate and interact together during the first 3 hours of development to establish PcG silencing. Interacts with corto in vitro. In terms of tissue distribution, widely expressed.

Its subcellular location is the nucleus. Its function is as follows. Polycomb group (PcG) protein. While PcG proteins are generally required to maintain the transcriptionally repressive state of homeotic genes throughout development, this protein is specifically required during the first 6 hours of embryogenesis to establish the repressed state. Component of the Esc/E(z) complex, which methylates 'Lys-9' and 'Lys-27' residues of histone H3, leading to transcriptional repression of the affected target gene. The Esc/E(z) complex is necessary but not sufficient for the repression of homeotic target genes, suggesting that the recruitment of the distinct PRC1 complex is also required. The polypeptide is Polycomb protein esc (esc) (Drosophila melanogaster (Fruit fly)).